We begin with the raw amino-acid sequence, 690 residues long: DNA-directed RNA polymerase subunit beta' (690 aa).

Positions 76, 78, 94, and 97 each coordinate Zn(2+). Positions 496, 498, and 500 each coordinate Mg(2+).

Belongs to the RNA polymerase beta' chain family. RpoC1 subfamily. In terms of assembly, in plastids the minimal PEP RNA polymerase catalytic core is composed of four subunits: alpha, beta, beta', and beta''. When a (nuclear-encoded) sigma factor is associated with the core the holoenzyme is formed, which can initiate transcription. Requires Mg(2+) as cofactor. Zn(2+) serves as cofactor.

It localises to the plastid. The protein resides in the chloroplast. It catalyses the reaction RNA(n) + a ribonucleoside 5'-triphosphate = RNA(n+1) + diphosphate. Functionally, DNA-dependent RNA polymerase catalyzes the transcription of DNA into RNA using the four ribonucleoside triphosphates as substrates. The polypeptide is DNA-directed RNA polymerase subunit beta' (Lemna minor (Common duckweed)).